Reading from the N-terminus, the 467-residue chain is ATP synthase subunit beta (467 aa).

150 to 157 (GGAGVGKT) contributes to the ATP binding site.

Belongs to the ATPase alpha/beta chains family. As to quaternary structure, F-type ATPases have 2 components, CF(1) - the catalytic core - and CF(0) - the membrane proton channel. CF(1) has five subunits: alpha(3), beta(3), gamma(1), delta(1), epsilon(1). CF(0) has three main subunits: a(1), b(2) and c(9-12). The alpha and beta chains form an alternating ring which encloses part of the gamma chain. CF(1) is attached to CF(0) by a central stalk formed by the gamma and epsilon chains, while a peripheral stalk is formed by the delta and b chains.

It localises to the cell inner membrane. It catalyses the reaction ATP + H2O + 4 H(+)(in) = ADP + phosphate + 5 H(+)(out). Its function is as follows. Produces ATP from ADP in the presence of a proton gradient across the membrane. The catalytic sites are hosted primarily by the beta subunits. The chain is ATP synthase subunit beta from Vibrio parahaemolyticus serotype O3:K6 (strain RIMD 2210633).